Here is a 379-residue protein sequence, read N- to C-terminus: Cytochrome b (379 aa).

The next 4 membrane-spanning stretches (helical) occupy residues 33-53 (FGSL…FLAM), 77-98 (WTIR…FIHV), 113-133 (WNVG…GYVL), and 178-198 (FFAL…IHLL). H83 and H97 together coordinate heme b. H182 and H196 together coordinate heme b. H201 provides a ligand contact to a ubiquinone. 4 helical membrane passes run 226–246 (TKDF…ALFY), 288–308 (LGGV…PFLQ), 320–340 (LSQF…WIGG), and 347–367 (FINI…FIMP).

This sequence belongs to the cytochrome b family. As to quaternary structure, the cytochrome bc1 complex contains 11 subunits: 3 respiratory subunits (MT-CYB, CYC1 and UQCRFS1), 2 core proteins (UQCRC1 and UQCRC2) and 6 low-molecular weight proteins (UQCRH/QCR6, UQCRB/QCR7, UQCRQ/QCR8, UQCR10/QCR9, UQCR11/QCR10 and a cleavage product of UQCRFS1). This cytochrome bc1 complex then forms a dimer. Heme b is required as a cofactor.

The protein localises to the mitochondrion inner membrane. Its function is as follows. Component of the ubiquinol-cytochrome c reductase complex (complex III or cytochrome b-c1 complex) that is part of the mitochondrial respiratory chain. The b-c1 complex mediates electron transfer from ubiquinol to cytochrome c. Contributes to the generation of a proton gradient across the mitochondrial membrane that is then used for ATP synthesis. This chain is Cytochrome b (MT-CYB), found in Lepilemur ankaranensis (Ankarana sportive lemur).